A 378-amino-acid chain; its full sequence is MADFYDTLGVNRNADADSLKRAYRRLARQYHPDINKEAGAEERFKEIGRAYEVLGDPEKRARYDQFGEAGLGGSAGMPDMGDMGGFADIFETFFSGFGGPGSSGARTQRRGPQQGDDLRYDLTIDFNQAVFGQEREIKIPHLETCDVCRGTGAKPGTGPTTCSTCGGAGQVRRATRTPFGSFTQVSDCPTCSGSGQVISDSCQSCGGQGVKQVRKKLRINIPAGVDTGTRLRVSGEGNAGPRGGPSGDLYVFLKVKSHARLKRDGLNIHSEVNVSYLQAILGDTIEVDTVDGPTTLQIPSGTQPSAVLILDNKGIPKLGNPVARGNHCISVNIKIPSRLTDDEKILLEKLAIYYSAKGPQNHHHNSGLFSRLFKSNAS.

The region spanning 3–67 (DFYDTLGVNR…EKRARYDQFG (65 aa)) is the J domain. The segment at 132–214 (GQEREIKIPH…CGGQGVKQVR (83 aa)) adopts a CR-type zinc-finger fold. Zn(2+) contacts are provided by Cys-145, Cys-148, Cys-162, Cys-165, Cys-188, Cys-191, Cys-202, and Cys-205. 4 CXXCXGXG motif repeats span residues 145-152 (CDVCRGTG), 162-169 (CSTCGGAG), 188-195 (CPTCSGSG), and 202-209 (CQSCGGQG).

The protein belongs to the DnaJ family. Homodimer. It depends on Zn(2+) as a cofactor.

The protein localises to the cytoplasm. In terms of biological role, participates actively in the response to hyperosmotic and heat shock by preventing the aggregation of stress-denatured proteins and by disaggregating proteins, also in an autonomous, DnaK-independent fashion. Unfolded proteins bind initially to DnaJ; upon interaction with the DnaJ-bound protein, DnaK hydrolyzes its bound ATP, resulting in the formation of a stable complex. GrpE releases ADP from DnaK; ATP binding to DnaK triggers the release of the substrate protein, thus completing the reaction cycle. Several rounds of ATP-dependent interactions between DnaJ, DnaK and GrpE are required for fully efficient folding. Also involved, together with DnaK and GrpE, in the DNA replication of plasmids through activation of initiation proteins. The chain is Chaperone protein DnaJ from Prochlorococcus marinus (strain SARG / CCMP1375 / SS120).